A 497-amino-acid chain; its full sequence is uncharacterized protein (497 aa).

Basic and acidic residues predominate over residues 44 to 74 (IRQEKEMKRHDDDGRQYQSDRKFAKSKHDDI). Disordered regions lie at residues 44–95 (IRQE…SVGR), 120–151 (VSRSSSIGHSGSTAPWSSVGRHNRKKDNEHRD), and 195–227 (GNVITPGVTSTTGAPSGKASLSRAASNSSTSAR). Residues 120–131 (VSRSSSIGHSGS) are compositionally biased toward low complexity. Phosphoserine occurs at positions 123, 125, and 131. Phosphothreonine is present on Thr-132. The segment covering 213–227 (ASLSRAASNSSTSAR) has biased composition (low complexity). Thr-258 carries the phosphothreonine modification. Residue Ser-310 is modified to Phosphoserine. Residues 367–385 (NVNPSNQDLASVKQPSGFS) show a composition bias toward polar residues. The segment at 367–497 (NVNPSNQDLA…GFPDTSRPPH (131 aa)) is disordered. Positions 400–409 (NFSNDDSSFF) are enriched in low complexity. Ser-436 bears the Phosphoserine mark. The segment covering 448-472 (GLSSGASIPSAPPGFGYQQPSFPYS) has biased composition (low complexity).

It localises to the cytoplasm. The protein resides in the nucleus. This is an uncharacterized protein from Schizosaccharomyces pombe (strain 972 / ATCC 24843) (Fission yeast).